Consider the following 530-residue polypeptide: UPF0422 protein lpp3030 (530 aa).

The N-terminal stretch at 1–19 (MKFKKIILALACLSSPLYA) is a signal peptide. A coiled-coil region spans residues 20 to 66 (DQDQQLKSEIQRLQHQAEDLQAQLNRLQKQLANHKSSQQKHEQQAAA). Residues 50-81 (LANHKSSQQKHEQQAAAKPAEPKSKPTTKSGA) are disordered. The span at 63–79 (QAAAKPAEPKSKPTTKS) shows a compositional bias: low complexity.

The protein belongs to the UPF0422 family.

This Legionella pneumophila (strain Paris) protein is UPF0422 protein lpp3030.